Here is a 71-residue protein sequence, read N- to C-terminus: DNA-directed RNA polymerase subunit omega (71 aa).

This sequence belongs to the RNA polymerase subunit omega family. As to quaternary structure, the RNAP catalytic core consists of 2 alpha, 1 beta, 1 beta' and 1 omega subunit. When a sigma factor is associated with the core the holoenzyme is formed, which can initiate transcription.

It catalyses the reaction RNA(n) + a ribonucleoside 5'-triphosphate = RNA(n+1) + diphosphate. Its function is as follows. Promotes RNA polymerase assembly. Latches the N- and C-terminal regions of the beta' subunit thereby facilitating its interaction with the beta and alpha subunits. This is DNA-directed RNA polymerase subunit omega from Campylobacter concisus (strain 13826).